Here is a 516-residue protein sequence, read N- to C-terminus: Nucleolar complex protein 4 homolog (516 aa).

A run of 3 helical transmembrane segments spans residues Ser296–Ile316, Phe347–Ala367, and Leu375–Leu395.

This sequence belongs to the CBF/MAK21 family.

The protein resides in the nucleus membrane. It localises to the nucleus. It is found in the nucleolus. This chain is Nucleolar complex protein 4 homolog (Noc4l), found in Rattus norvegicus (Rat).